Reading from the N-terminus, the 75-residue chain is MATKTSNLGHLLLSLFILLLFILSQVGVAQAKRLQQRNKLRLDCVPLPPPPPPLRGIVKPPIASFHSASPKDKGP.

The signal sequence occupies residues methionine 1–alanine 31. The interval proline 51 to proline 75 is disordered. The SCOOP motif signature appears at proline 61–proline 75. The short motif at serine 67–serine 69 is the SxS motif essential for MIK2 binding element.

Belongs to the serine rich endogenous peptide (SCOOP) phytocytokine family. In terms of assembly, interacts with MIK2 (via extracellular leucine-rich repeat domain); this interaction triggers the formation of complex between MIK2 and the BAK1/SERK3 and SERK4 coreceptors, and subsequent BAK1 activation by phosphorylation. As to expression, mostly expressed in leaves and seedlings shoots, and, to a lower extent, in roots, stems, siliques, seeds and flowers.

It localises to the cell membrane. The protein resides in the secreted. It is found in the extracellular space. Its subcellular location is the apoplast. Functionally, brassicaceae-specific phytocytokine (plant endogenous peptide released into the apoplast) perceived by MIK2 in a BAK1/SERK3 and SERK4 coreceptors-dependent manner, that modulates various physiological and antimicrobial processes including growth prevention and reactive oxygen species (ROS) response regulation. Inhibits root growth. Prevents general growth and development. Exhibits antibacterial effects against Pseudomonas syringae pv. tomato DC3000, Ralstonia solanacearum, Bacillus subtilis and Agrobacterium tumefaciens, thus being an antimicrobial peptide (AMP). The chain is Serine rich endogenous peptide 4 from Arabidopsis thaliana (Mouse-ear cress).